The primary structure comprises 429 residues: 3-phosphoshikimate 1-carboxyvinyltransferase (429 aa).

3-phosphoshikimate is bound by residues Lys-23, Ser-24, and Arg-28. Lys-23 is a binding site for phosphoenolpyruvate. The phosphoenolpyruvate site is built by Gly-97 and Arg-125. Positions 170, 171, 172, 198, 314, 338, and 342 each coordinate 3-phosphoshikimate. Residue Gln-172 coordinates phosphoenolpyruvate. Catalysis depends on Asp-314, which acts as the Proton acceptor. Phosphoenolpyruvate contacts are provided by Arg-346, Arg-388, and Lys-413.

Belongs to the EPSP synthase family. As to quaternary structure, monomer.

The protein resides in the cytoplasm. It carries out the reaction 3-phosphoshikimate + phosphoenolpyruvate = 5-O-(1-carboxyvinyl)-3-phosphoshikimate + phosphate. Its pathway is metabolic intermediate biosynthesis; chorismate biosynthesis; chorismate from D-erythrose 4-phosphate and phosphoenolpyruvate: step 6/7. Catalyzes the transfer of the enolpyruvyl moiety of phosphoenolpyruvate (PEP) to the 5-hydroxyl of shikimate-3-phosphate (S3P) to produce enolpyruvyl shikimate-3-phosphate and inorganic phosphate. In Pectobacterium carotovorum subsp. carotovorum (strain PC1), this protein is 3-phosphoshikimate 1-carboxyvinyltransferase.